The chain runs to 802 residues: MNQFYKKSHYSIQKHQITGLLFLLFIYPFSTSYGNEQFSFDSRFLPSGYNYSLNSNLPPEGEYLVDIYINKIKKESAIIPFYIKGNKLVPCLSKEKISSLGININNNDNTECVETSKAGISNISFEFSSLRLFIAVPKNLLSEIDKISSKDIDNGIHALFFNYQVNTRLANNKNRYDYISVSPNINYFSWRLRNLFEFNQNNDEKTWERNYTYLEKSFYDKKLNLVVGESYTNSNVYNNYSFTGISVSTDTDMYTPSEIDYTPEIHGVADSDSQIIVRQGNTIIINESVPAGPFSFPITNLMYTGGQLNVEITDIYGNKKQYTVNNSSLPVMRKAGLMVYNFISGKLTKKNSEDGDFFTQGDINYGTHYNSTLFGGYQFSKNYFNLSTGIGTDLGFSGAWLLHVSRSNFKNKNGYNINLQQNTQLRPFNAGVNFDYAYRKKRYVELSDIGWHGNLYNQLKNSFSLSLSKSLNKYGNFSLDYNKMKYWDNAYDSNSMSIRYFFKFMRAMITTNCSLNKYQSYEKKDKRFSINISLPLTKDYGHISSNYSFSNANTGTATSSVGLNGSFFNDARLNWNIQQNRTTRNNGYTDNTSYIATSYASPYGVFTGSYSGSNKYSSQFYSASGGIVLHSDGVAFTQKAGDTSALVRIDNISDIKIGNTPGVYTGYNGFALIPHLQPFKKNTILINDKGIPDGITLANIKKQVIPSRGAIVKVKFDAKKGNDILFKLTTKDGKTPPLGAIAHEKNGKQINTGIVDDDGMLYMSGLSGTGIINVTWNGKVCSFPFSEKDISSKQLSVVNKQC.

Belongs to the fimbrial export usher family.

Its subcellular location is the cell outer membrane. Involved in the export and assembly of C6 fimbrial subunits across the outer membrane. This chain is Outer membrane usher protein CssD (cssD), found in Escherichia coli.